Consider the following 521-residue polypeptide: Acetyl-CoA hydrolase (521 aa).

276 to 280 (GIGNI) contacts CoA. Glu301 serves as the catalytic 5-glutamyl coenzyme A thioester intermediate. CoA contacts are provided by Asn391 and Gly395.

The protein belongs to the acetyl-CoA hydrolase/transferase family.

The protein localises to the cytoplasm. It catalyses the reaction acetyl-CoA + H2O = acetate + CoA + H(+). Presumably involved in regulating the intracellular acetyl-CoA pool for fatty acid and cholesterol synthesis and fatty acid oxidation. The chain is Acetyl-CoA hydrolase (ach1) from Schizosaccharomyces pombe (strain 972 / ATCC 24843) (Fission yeast).